A 162-amino-acid polypeptide reads, in one-letter code: UPF0114 protein PSPA7_5214 (162 aa).

3 consecutive transmembrane segments (helical) span residues 15–35 (LLAP…IKFF), 53–73 (LILV…LVMV), and 136–156 (LMWY…MGYL).

Belongs to the UPF0114 family.

It localises to the cell membrane. This chain is UPF0114 protein PSPA7_5214, found in Pseudomonas paraeruginosa (strain DSM 24068 / PA7) (Pseudomonas aeruginosa (strain PA7)).